The sequence spans 205 residues: Phospholipase D (205 aa).

An N-terminal signal peptide occupies residues 1–22 (MKSKNNKFIAVSISFILGIALG). The 28-residue stretch at 142-169 (VPGIAHNKVIIIDKKKVITGSFNFTVSA) folds into the PLD phosphodiesterase domain. Catalysis depends on residues His147, Lys149, and Asp154.

The protein belongs to the phospholipase D family. In terms of assembly, homodimer.

It is found in the secreted. The enzyme catalyses a 1,2-diacyl-sn-glycero-3-phosphocholine + H2O = a 1,2-diacyl-sn-glycero-3-phosphate + choline + H(+). Functionally, could be a virulence factor. The chain is Phospholipase D (pld) from Rickettsia prowazekii (strain Madrid E).